The primary structure comprises 373 residues: S-adenosylmethionine:tRNA ribosyltransferase-isomerase (373 aa).

Belongs to the QueA family. As to quaternary structure, monomer.

The protein localises to the cytoplasm. It catalyses the reaction 7-aminomethyl-7-carbaguanosine(34) in tRNA + S-adenosyl-L-methionine = epoxyqueuosine(34) in tRNA + adenine + L-methionine + 2 H(+). Its pathway is tRNA modification; tRNA-queuosine biosynthesis. Its function is as follows. Transfers and isomerizes the ribose moiety from AdoMet to the 7-aminomethyl group of 7-deazaguanine (preQ1-tRNA) to give epoxyqueuosine (oQ-tRNA). The polypeptide is S-adenosylmethionine:tRNA ribosyltransferase-isomerase (Caulobacter sp. (strain K31)).